A 145-amino-acid chain; its full sequence is 3-hydroxyacyl-[acyl-carrier-protein] dehydratase FabZ (145 aa).

His-48 is a catalytic residue.

It belongs to the thioester dehydratase family. FabZ subfamily.

It is found in the cytoplasm. It catalyses the reaction a (3R)-hydroxyacyl-[ACP] = a (2E)-enoyl-[ACP] + H2O. Involved in unsaturated fatty acids biosynthesis. Catalyzes the dehydration of short chain beta-hydroxyacyl-ACPs and long chain saturated and unsaturated beta-hydroxyacyl-ACPs. The polypeptide is 3-hydroxyacyl-[acyl-carrier-protein] dehydratase FabZ (Stutzerimonas stutzeri (strain A1501) (Pseudomonas stutzeri)).